Here is a 413-residue protein sequence, read N- to C-terminus: Aspartate aminotransferase, cytoplasmic (413 aa).

L-aspartate is bound by residues Gly-39 and Trp-141. A Phosphoserine modification is found at Ser-149. Residue Asn-195 participates in L-aspartate binding. Lys-259 carries the N6-(pyridoxal phosphate)lysine modification. Arg-387 provides a ligand contact to L-aspartate.

Belongs to the class-I pyridoxal-phosphate-dependent aminotransferase family. As to quaternary structure, homodimer. The cofactor is pyridoxal 5'-phosphate.

The protein localises to the cytoplasm. It catalyses the reaction L-aspartate + 2-oxoglutarate = oxaloacetate + L-glutamate. The catalysed reaction is L-cysteine + 2-oxoglutarate = 2-oxo-3-sulfanylpropanoate + L-glutamate. It carries out the reaction (2S)-2-aminobutanoate + 2-oxoglutarate = 2-oxobutanoate + L-glutamate. The enzyme catalyses 3-sulfino-L-alanine + 2-oxoglutarate = 3-sulfinopyruvate + L-glutamate. Functionally, biosynthesis of L-glutamate from L-aspartate or L-cysteine. Important regulator of levels of glutamate, the major excitatory neurotransmitter of the vertebrate central nervous system. Acts as a scavenger of glutamate in brain neuroprotection. The aspartate aminotransferase activity is involved in hepatic glucose synthesis during development and in adipocyte glyceroneogenesis. Using L-cysteine as substrate, regulates levels of mercaptopyruvate, an important source of hydrogen sulfide. Mercaptopyruvate is converted into H(2)S via the action of 3-mercaptopyruvate sulfurtransferase (3MST). Hydrogen sulfide is an important synaptic modulator and neuroprotectant in the brain. The polypeptide is Aspartate aminotransferase, cytoplasmic (Pongo abelii (Sumatran orangutan)).